Here is an 85-residue protein sequence, read N- to C-terminus: Small ribosomal subunit protein uS17 (85 aa).

Belongs to the universal ribosomal protein uS17 family. As to quaternary structure, part of the 30S ribosomal subunit.

One of the primary rRNA binding proteins, it binds specifically to the 5'-end of 16S ribosomal RNA. The polypeptide is Small ribosomal subunit protein uS17 (Desulforapulum autotrophicum (strain ATCC 43914 / DSM 3382 / VKM B-1955 / HRM2) (Desulfobacterium autotrophicum)).